We begin with the raw amino-acid sequence, 453 residues long: METVAVRDIFKNYKEFSNVKLVGWVRSNRDNGSIGFISFTDGSCIHSIQLVYKNGETNNFEEAKSTRTGSAILVEGVVVESKQPNQSFEIKVTNFILLKQADEDYPLQKKEHGAEFLRTIAHLRQRTNKYGTIMRLRSELAFAIHNFFHQNNFVWVSSPIITSNDAEGAGENFYVDSKTVKNFFGKNASLTVSGQMHAEAYAQSYKRVYTFGPTFRAEKSNTNRHVSEFWMVEPEIAFCNLEQLMYLIEEFVKYLIRFILKNCKDEMTFLNKLSNNTLSEKLLNAISHPFEKITYKKAIAILKSDVANKKVKFENESIYFGMDLNSEHEKYLCEKVFNKPLFIYDYPAEIKAFYMKMNADGTTVGACDLLMPGIGEIVGGSERESDYTKLVKKCTKANMKVEDIEWYLALRKYGYHKSAGFGLGFERFLMYVTECENVKDTIPFPRSYGSLDF.

Belongs to the class-II aminoacyl-tRNA synthetase family. Homodimer.

The protein localises to the cytoplasm. The enzyme catalyses tRNA(Asn) + L-asparagine + ATP = L-asparaginyl-tRNA(Asn) + AMP + diphosphate + H(+). The protein is Asparagine--tRNA ligase of Malacoplasma penetrans (strain HF-2) (Mycoplasma penetrans).